A 143-amino-acid polypeptide reads, in one-letter code: D-aminoacyl-tRNA deacylase (143 aa).

A Gly-cisPro motif, important for rejection of L-amino acids motif is present at residues 135-136 (GP).

The protein belongs to the DTD family. Homodimer.

Its subcellular location is the cytoplasm. The catalysed reaction is glycyl-tRNA(Ala) + H2O = tRNA(Ala) + glycine + H(+). It carries out the reaction a D-aminoacyl-tRNA + H2O = a tRNA + a D-alpha-amino acid + H(+). Functionally, an aminoacyl-tRNA editing enzyme that deacylates mischarged D-aminoacyl-tRNAs. Also deacylates mischarged glycyl-tRNA(Ala), protecting cells against glycine mischarging by AlaRS. Acts via tRNA-based rather than protein-based catalysis; rejects L-amino acids rather than detecting D-amino acids in the active site. By recycling D-aminoacyl-tRNA to D-amino acids and free tRNA molecules, this enzyme counteracts the toxicity associated with the formation of D-aminoacyl-tRNA entities in vivo and helps enforce protein L-homochirality. This is D-aminoacyl-tRNA deacylase from Mycobacterium bovis (strain BCG / Pasteur 1173P2).